Reading from the N-terminus, the 463-residue chain is Asparagine--tRNA ligase (463 aa).

It belongs to the class-II aminoacyl-tRNA synthetase family. Homodimer.

Its subcellular location is the cytoplasm. The enzyme catalyses tRNA(Asn) + L-asparagine + ATP = L-asparaginyl-tRNA(Asn) + AMP + diphosphate + H(+). In Alkaliphilus oremlandii (strain OhILAs) (Clostridium oremlandii (strain OhILAs)), this protein is Asparagine--tRNA ligase.